The chain runs to 275 residues: Arylamine N-acetyltransferase (275 aa).

Catalysis depends on Cys70, which acts as the Acyl-thioester intermediate. Active-site residues include His110 and Asp127.

Belongs to the arylamine N-acetyltransferase family. As to quaternary structure, homodimer and homotetramer.

It catalyses the reaction an arylamine + acetyl-CoA = an N-acetylarylamine + CoA. Catalyzes the transfer of the acetyl group from acetyl coenzyme A to the free amino group of arylamines and hydrazines. Substrates include isoniazid, anisidine, and 4-aminoveratrole, and to a much lesser extent, p-aminobenzoic acid. In Mycolicibacterium smegmatis (Mycobacterium smegmatis), this protein is Arylamine N-acetyltransferase.